The chain runs to 513 residues: Cobyric acid synthase (513 aa).

In terms of domain architecture, GATase cobBQ-type spans 252–457 (KIDIAVIRLP…LHGIFDEEGI (206 aa)). C333 functions as the Nucleophile in the catalytic mechanism. Residue H449 is part of the active site.

It belongs to the CobB/CobQ family. CobQ subfamily.

It participates in cofactor biosynthesis; adenosylcobalamin biosynthesis. Its function is as follows. Catalyzes amidations at positions B, D, E, and G on adenosylcobyrinic A,C-diamide. NH(2) groups are provided by glutamine, and one molecule of ATP is hydrogenolyzed for each amidation. This Lachnoclostridium phytofermentans (strain ATCC 700394 / DSM 18823 / ISDg) (Clostridium phytofermentans) protein is Cobyric acid synthase.